Reading from the N-terminus, the 214-residue chain is Holliday junction branch migration complex subunit RuvA (214 aa).

Residues 1–63 (MISFLRGTVA…EDSLTLFGFS (63 aa)) form a domain I region. The domain II stretch occupies residues 64–142 (SDDEREVFDV…PHGTGAAAAP (79 aa)). The segment at 143-153 (AAAASAPWKPQ) is flexible linker. The segment at 153–214 (QVVAAMTSLG…RAGNRVGSRG (62 aa)) is domain III.

This sequence belongs to the RuvA family. Homotetramer. Forms an RuvA(8)-RuvB(12)-Holliday junction (HJ) complex. HJ DNA is sandwiched between 2 RuvA tetramers; dsDNA enters through RuvA and exits via RuvB. An RuvB hexamer assembles on each DNA strand where it exits the tetramer. Each RuvB hexamer is contacted by two RuvA subunits (via domain III) on 2 adjacent RuvB subunits; this complex drives branch migration. In the full resolvosome a probable DNA-RuvA(4)-RuvB(12)-RuvC(2) complex forms which resolves the HJ.

The protein resides in the cytoplasm. In terms of biological role, the RuvA-RuvB-RuvC complex processes Holliday junction (HJ) DNA during genetic recombination and DNA repair, while the RuvA-RuvB complex plays an important role in the rescue of blocked DNA replication forks via replication fork reversal (RFR). RuvA specifically binds to HJ cruciform DNA, conferring on it an open structure. The RuvB hexamer acts as an ATP-dependent pump, pulling dsDNA into and through the RuvAB complex. HJ branch migration allows RuvC to scan DNA until it finds its consensus sequence, where it cleaves and resolves the cruciform DNA. The polypeptide is Holliday junction branch migration complex subunit RuvA (Arthrobacter sp. (strain FB24)).